The primary structure comprises 541 residues: Malate synthase (541 aa).

Residue Arg172 is the Proton acceptor of the active site. Asp452 (proton donor) is an active-site residue.

This sequence belongs to the malate synthase family.

It is found in the cytoplasm. The catalysed reaction is glyoxylate + acetyl-CoA + H2O = (S)-malate + CoA + H(+). Its pathway is carbohydrate metabolism; glyoxylate cycle; (S)-malate from isocitrate: step 2/2. The polypeptide is Malate synthase (mls) (Myxococcus xanthus (strain DK1622)).